We begin with the raw amino-acid sequence, 423 residues long: Alpha-1-antichymotrypsin (423 aa).

The N-terminal stretch at 1–23 (MERMLPFLALGLLVAGFCPAVLC) is a signal peptide. N-linked (GlcNAc...) asparagine glycans are attached at residues Asn93, Asn106, Asn127, Asn186, and Asn271. The tract at residues 369–394 (GTEASAATAVKITLLSALVDPMTIVR) is RCL.

It belongs to the serpin family. Interacts with DNAJC1. In terms of tissue distribution, plasma.

The protein localises to the secreted. In terms of biological role, although its physiological function is unclear, it can inhibit neutrophil cathepsin G and mast cell chymase, both of which can convert angiotensin-1 to the active angiotensin-2. In Pongo abelii (Sumatran orangutan), this protein is Alpha-1-antichymotrypsin (SERPINA3).